We begin with the raw amino-acid sequence, 222 residues long: 7-cyano-7-deazaguanine synthase (222 aa).

11–21 (FSGGQDSTTCL) lines the ATP pocket. Cys187, Cys195, Cys198, and Cys201 together coordinate Zn(2+).

It belongs to the QueC family. Zn(2+) serves as cofactor.

The catalysed reaction is 7-carboxy-7-deazaguanine + NH4(+) + ATP = 7-cyano-7-deazaguanine + ADP + phosphate + H2O + H(+). Its pathway is purine metabolism; 7-cyano-7-deazaguanine biosynthesis. In terms of biological role, catalyzes the ATP-dependent conversion of 7-carboxy-7-deazaguanine (CDG) to 7-cyano-7-deazaguanine (preQ(0)). The polypeptide is 7-cyano-7-deazaguanine synthase (Actinobacillus pleuropneumoniae serotype 7 (strain AP76)).